A 339-amino-acid chain; its full sequence is Anthranilate phosphoribosyltransferase (339 aa).

5-phospho-alpha-D-ribose 1-diphosphate is bound by residues Gly86, 89–90, Thr94, 96–99, 114–122, and Ser126; these read GD, NIST, and KHGNRGVSS. Gly86 lines the anthranilate pocket. Ser98 lines the Mg(2+) pocket. Position 117 (Asn117) interacts with anthranilate. Arg172 serves as a coordination point for anthranilate. Residues Asp230 and Glu231 each coordinate Mg(2+).

The protein belongs to the anthranilate phosphoribosyltransferase family. In terms of assembly, homodimer. It depends on Mg(2+) as a cofactor.

It carries out the reaction N-(5-phospho-beta-D-ribosyl)anthranilate + diphosphate = 5-phospho-alpha-D-ribose 1-diphosphate + anthranilate. Its pathway is amino-acid biosynthesis; L-tryptophan biosynthesis; L-tryptophan from chorismate: step 2/5. Functionally, catalyzes the transfer of the phosphoribosyl group of 5-phosphorylribose-1-pyrophosphate (PRPP) to anthranilate to yield N-(5'-phosphoribosyl)-anthranilate (PRA). The chain is Anthranilate phosphoribosyltransferase from Photobacterium profundum (strain SS9).